Reading from the N-terminus, the 322-residue chain is Nucleoprotein (322 aa).

Residues Tyr-43, Tyr-46, Val-76, Arg-122, Lys-240, and Ser-269 each contribute to the RNA site.

Belongs to the tenuiviruses nucleocapsid protein family.

The protein localises to the virion. It localises to the host cytoplasm. Its function is as follows. Encapsidates the genome, protecting it from nucleases. The encapsidated genomic RNA is termed the nucleocapsid (NC), and serves as template for viral transcription and replication. This chain is Nucleoprotein, found in Avena sativa (Oat).